A 33-amino-acid chain; its full sequence is Dermaseptin DS VIII-like peptide (33 aa).

Position 33 is an alanine amide (A33).

As to expression, expressed by the parotoid glands.

Its subcellular location is the secreted. In terms of biological role, possesses a potent antimicrobial activity against bacteria, fungi and protozoa. Probably acts by disturbing membrane functions with its amphipathic structure. This Phyllomedusa burmeisteri (Brazilian common walking leaf frog) protein is Dermaseptin DS VIII-like peptide.